Reading from the N-terminus, the 767-residue chain is V-set and immunoglobulin domain-containing protein 10-like 2 (767 aa).

An N-terminal signal peptide occupies residues 1-28 (MVGQRAQHSPVSLLLLIHLCLLHLRASG). Ig-like domains follow at residues 34–140 (PEAP…SHLT), 150–234 (PQVR…AFLD), and 242–324 (PVIT…TTVQ). 3 cysteine pairs are disulfide-bonded: cysteine 56–cysteine 122, cysteine 169–cysteine 217, and cysteine 268–cysteine 308. Residue asparagine 376 is glycosylated (N-linked (GlcNAc...) asparagine). Ig-like domains follow at residues 399-499 (PALA…LQLE) and 501-593 (PQLD…VLLE). 2 disulfides stabilise this stretch: cysteine 435-cysteine 481 and cysteine 522-cysteine 577. In terms of domain architecture, Fibronectin type-III spans 599–699 (APPNVTISRL…EVKIPADPPF (101 aa)). N-linked (GlcNAc...) asparagine glycosylation is found at asparagine 602 and asparagine 628. The helical transmembrane segment at 704–724 (AVLGAAGTGMVVATVASLLVF) threads the bilayer. The disordered stretch occupies residues 735–754 (PRLETPTTTPGLDPAQETTD). A compositionally biased stretch (polar residues) spans 739 to 754 (TPTTTPGLDPAQETTD).

It localises to the membrane. In Homo sapiens (Human), this protein is V-set and immunoglobulin domain-containing protein 10-like 2.